An 85-amino-acid polypeptide reads, in one-letter code: Large ribosomal subunit protein bL27 (85 aa).

Residues 1-22 (MAHKKGVGSTRNGRDSESKRLG) are disordered.

The protein belongs to the bacterial ribosomal protein bL27 family.

The sequence is that of Large ribosomal subunit protein bL27 from Geobacter metallireducens (strain ATCC 53774 / DSM 7210 / GS-15).